The following is a 390-amino-acid chain: 3-ketoacyl-CoA thiolase (390 aa).

Catalysis depends on Cys-95, which acts as the Acyl-thioester intermediate. Active-site proton acceptor residues include His-346 and Cys-376.

This sequence belongs to the thiolase-like superfamily. Thiolase family. Heterotetramer of two alpha chains (FadB) and two beta chains (FadA).

The protein localises to the cytoplasm. The enzyme catalyses an acyl-CoA + acetyl-CoA = a 3-oxoacyl-CoA + CoA. Its pathway is lipid metabolism; fatty acid beta-oxidation. Catalyzes the final step of fatty acid oxidation in which acetyl-CoA is released and the CoA ester of a fatty acid two carbons shorter is formed. This is 3-ketoacyl-CoA thiolase from Acinetobacter baylyi (strain ATCC 33305 / BD413 / ADP1).